The chain runs to 259 residues: Ribose-5-phosphate isomerase (259 aa).

The protein belongs to the ribose 5-phosphate isomerase family.

Its subcellular location is the cytoplasm. It catalyses the reaction aldehydo-D-ribose 5-phosphate = D-ribulose 5-phosphate. The protein operates within carbohydrate degradation; pentose phosphate pathway; D-ribose 5-phosphate from D-ribulose 5-phosphate (non-oxidative stage): step 1/1. This is Ribose-5-phosphate isomerase (RKI1) from Vanderwaltozyma polyspora (strain ATCC 22028 / DSM 70294 / BCRC 21397 / CBS 2163 / NBRC 10782 / NRRL Y-8283 / UCD 57-17) (Kluyveromyces polysporus).